The chain runs to 447 residues: QAKVTWSLKAAEEAEAVANINCSGHGRAFLDGILSDGSPKCECNTCYTGADCSQKITGCSADVASGDGLFLEEYWQQHKENSAVLVSGWHRTSYFFNPVSNFISFELEKTIKELHEIVGNAAAKDRYIVFGVGVTQLIHGLVISLSPNMTATPCAPQSKVVAHAPYYPVFREQTKYFDKKGYEWKGNAADYVNTSTPEQFIEMVTSPNNPEGLLRHEVIKGCKSIYDMVYYWPHYTPIKYKADEDIMLFTMSKYTGHSGSRFGWALIKDETVYNKLLNYMTKNTEGTSRETQLRSLKILKEVTAMIKTQKGTMRDLNTFGFQKLRERWVNITALLDKSDRFSYQKLPQSEYCNYFRRMRPPSPSYAWVKCEWEEDKDCYQTFQNGRINTQSGEGFEAGSRYVRLSLIKTKDDFDQLMYYLKIMVEAKRKTPLIKQLSNDQISRRPFI.

A propeptide spanning residues 1-2 (QA) is cleaved from the precursor. Residues 15–61 (EAVANINCSGHGRAFLDGILSDGSPKCECNTCYTGADCSQKITGCSA) enclose the EGF-like; atypical domain. Asn21 carries an N-linked (GlcNAc...) asparagine glycan. Intrachain disulfides connect Cys22/Cys41, Cys43/Cys52, and Cys46/Cys59. 94 to 102 (YFFNPVSNF) is a chloride binding site. N-linked (GlcNAc...) asparagine glycosylation is found at Asn148 and Asn193. The residue at position 253 (Lys253) is an N6-(pyridoxal phosphate)lysine. N-linked (GlcNAc...) asparagine glycosylation occurs at Asn330. The cysteines at positions 370 and 378 are disulfide-linked.

The protein belongs to the alliinase family. Homodimer. Pyridoxal 5'-phosphate serves as cofactor.

It localises to the vacuole. It carries out the reaction an S-alkyl-L-cysteine S-oxide = an S-alkyl sulfenate + 2-aminoprop-2-enoate. This is Alliin lyase from Allium cepa var. aggregatum (Shallot).